Reading from the N-terminus, the 206-residue chain is A-type ATP synthase subunit D (206 aa).

It belongs to the V-ATPase D subunit family. As to quaternary structure, has multiple subunits with at least A(3), B(3), C, D, E, F, H, I and proteolipid K(x).

The protein localises to the cell membrane. Its function is as follows. Component of the A-type ATP synthase that produces ATP from ADP in the presence of a proton gradient across the membrane. The protein is A-type ATP synthase subunit D of Methanococcoides burtonii (strain DSM 6242 / NBRC 107633 / OCM 468 / ACE-M).